The following is a 156-amino-acid chain: Ribonuclease H (156 aa).

The RNase H type-1 domain occupies 2–144 (SQFDVTVFTD…CDVLARAQAS (143 aa)). Residues Asp11, Glu49, Asp71, and Asp136 each coordinate Mg(2+).

It belongs to the RNase H family. Monomer. It depends on Mg(2+) as a cofactor.

It is found in the cytoplasm. The enzyme catalyses Endonucleolytic cleavage to 5'-phosphomonoester.. Functionally, endonuclease that specifically degrades the RNA of RNA-DNA hybrids. This is Ribonuclease H from Nitratidesulfovibrio vulgaris (strain ATCC 29579 / DSM 644 / CCUG 34227 / NCIMB 8303 / VKM B-1760 / Hildenborough) (Desulfovibrio vulgaris).